A 289-amino-acid chain; its full sequence is ATP synthase gamma chain (289 aa).

This sequence belongs to the ATPase gamma chain family. As to quaternary structure, F-type ATPases have 2 components, CF(1) - the catalytic core - and CF(0) - the membrane proton channel. CF(1) has five subunits: alpha(3), beta(3), gamma(1), delta(1), epsilon(1). CF(0) has three main subunits: a, b and c.

Its subcellular location is the cell inner membrane. Functionally, produces ATP from ADP in the presence of a proton gradient across the membrane. The gamma chain is believed to be important in regulating ATPase activity and the flow of protons through the CF(0) complex. This chain is ATP synthase gamma chain, found in Cereibacter sphaeroides (strain ATCC 17025 / ATH 2.4.3) (Rhodobacter sphaeroides).